Consider the following 840-residue polypeptide: MSVVGIDLGFQSCYVAVARAGGIETIANEYSDRCTPACISFGPKNRSIGAAAKSQVISNAKNTVQGFKRFHGRAFSDPFVEAEKSNLAYDVVQLPTGLTGIKVTYMEEERNFTTEQVTAMLLSKLKETAESVLKKPVVDCVVSVPCFYTDAERRSVMDATQIAGLNCLRLMNETTAVALAYGIYKQDLPALEEKPRNVVFVDMGHSAYQVSVCAFNRGKLKVLATAFDTTLGGRKFDEVLVNHFCEEFGKKYKLDIKSKIRALLRLSQECEKLKKLMSANASDLPLSIECFMNDVDVSGTMNRGKFLEMCNDLLARVEPPLRSVLEQTKLKKEDIYAVEIVGGATRIPAVKEKISKFFGKELSTTLNADEAVTRGCALQCAILSPAFKVREFSITDVVPYPISLRWNSPAEEGSSDCEVFSKNHAAPFSKVLTFYRKEPFTLEAYYSSPQDLPYPDPAIAQFSVQKVTPQSDGSSSKVKVKVRVNVHGIFSVSSASLVEVHKSEENEEPMETDQNAKEEEKMQVDQEEPHVEEQQQQTPAENKAESEEMETSQAGSKDKKMDQPPQAKKAKVKTSTVDLPIENQLLWQIDREMLNLYIENEGKMIMQDKLEKERNDAKNAVEEYVYEMRDKLSGEYEKFVSEDDRNSFTLKLEDTENWLYEDGEDQPKQVYVDKLAELKNLGQPIKIRFQESEERPKLFEELGKQIQQYMKIISSFKNKEDQYDHLDAADMTKVEKSTNEAMEWMNNKLNLQNKQSLTMDPVVKSKEIEAKIKELTSICSPIISKPKPKVEPPKEEQKNAEQNGPVDGQGDNPGPQAAEQGTDAAVPSDSDKKLPEMDID.

N6-acetyllysine is present on Lys-53. Ser-76 is subject to Phosphoserine. Tyr-89 and Tyr-336 each carry phosphotyrosine. Ser-393 and Ser-415 each carry phosphoserine. At Lys-430 the chain carries N6-acetyllysine. The segment at 500–575 (VHKSEENEEP…QAKKAKVKTS (76 aa)) is disordered. A compositionally biased stretch (basic and acidic residues) spans 514–533 (QNAKEEEKMQVDQEEPHVEE). Phosphothreonine is present on Thr-538. Residues Ser-546 and Ser-647 each carry the phosphoserine modification. The residue at position 660 (Tyr-660) is a Phosphotyrosine. Residue Lys-679 is modified to N6-acetyllysine. Ser-756 is subject to Phosphoserine. At Lys-773 the chain carries N6-methyllysine. The tract at residues 783–840 (ISKPKPKVEPPKEEQKNAEQNGPVDGQGDNPGPQAAEQGTDAAVPSDSDKKLPEMDID) is disordered. Basic and acidic residues-rich tracts occupy residues 788 to 799 (PKVEPPKEEQKN) and 829 to 840 (DSDKKLPEMDID).

Belongs to the heat shock protein 70 family. Interacts with TJP1/ZO-1.

The protein localises to the cytoplasm. The chain is Heat shock 70 kDa protein 4 (HSPA4) from Pongo abelii (Sumatran orangutan).